We begin with the raw amino-acid sequence, 218 residues long: Protein N-lysine methyltransferase METTL21A (218 aa).

Residues tryptophan 47, 73–75 (GAG), aspartate 94, tryptophan 125, and alanine 143 contribute to the S-adenosyl-L-methionine site.

This sequence belongs to the methyltransferase superfamily. METTL21 family.

It localises to the cytoplasm. It carries out the reaction L-lysyl-[protein] + 3 S-adenosyl-L-methionine = N(6),N(6),N(6)-trimethyl-L-lysyl-[protein] + 3 S-adenosyl-L-homocysteine + 3 H(+). Functionally, protein-lysine methyltransferase that selectively trimethylates residues in heat shock protein 70 (HSP70) family members. The chain is Protein N-lysine methyltransferase METTL21A (mettl21a) from Danio rerio (Zebrafish).